A 726-amino-acid polypeptide reads, in one-letter code: Beta-glucosidase cel3A (726 aa).

A signal peptide spans 1–20 (MASRLVAGLQVLALAGTATA). N-linked (GlcNAc...) asparagine glycosylation is found at N223 and N592.

This sequence belongs to the glycosyl hydrolase 3 family.

The protein localises to the secreted. It catalyses the reaction Hydrolysis of terminal, non-reducing beta-D-glucosyl residues with release of beta-D-glucose.. Its pathway is glycan metabolism; cellulose degradation. Beta-glucosidases are one of a number of cellulolytic enzymes involved in the degradation of cellulosic biomass. Catalyzes the last step releasing glucose from the inhibitory cellobiose. Has a broad substrate specificity but preferentially hydrolyzes highly polymerized 1,3- and 1,4-beta-glucans. The polypeptide is Beta-glucosidase cel3A (Pyricularia oryzae (strain 70-15 / ATCC MYA-4617 / FGSC 8958) (Rice blast fungus)).